A 234-amino-acid polypeptide reads, in one-letter code: MSGLPIATNLYFDAHFHRRGVKLLPNEFYTTREDMVLVTVLGSCVAACLHDPIARIGGMNHFMLPDDGADPSAAASESMRYGAYAMEVLINELIKAGGRRERFEAKVFGGAAVLAGMTTINIGDRNADFVRRYLALERIRITAEDLQGVHPRKVAFMPHTGQAMVKKLRVQAPDVAEREAALAREAAGPRGERAARARPRVELFGTPAPKAQATPRIELFGTRATQPATRKQEA.

The segment at 183–234 is disordered; sequence AREAAGPRGERAARARPRVELFGTPAPKAQATPRIELFGTRATQPATRKQEA. The span at 190-201 shows a compositional bias: basic and acidic residues; that stretch reads RGERAARARPRV. Residues 223–234 are compositionally biased toward polar residues; the sequence is RATQPATRKQEA.

Belongs to the CheD family.

It catalyses the reaction L-glutaminyl-[protein] + H2O = L-glutamyl-[protein] + NH4(+). In terms of biological role, probably deamidates glutamine residues to glutamate on methyl-accepting chemotaxis receptors (MCPs), playing an important role in chemotaxis. The polypeptide is Probable chemoreceptor glutamine deamidase CheD 1 (Burkholderia thailandensis (strain ATCC 700388 / DSM 13276 / CCUG 48851 / CIP 106301 / E264)).